We begin with the raw amino-acid sequence, 175 residues long: Peptide methionine sulfoxide reductase MsrA (175 aa).

C12 is an active-site residue.

This sequence belongs to the MsrA Met sulfoxide reductase family.

The enzyme catalyses L-methionyl-[protein] + [thioredoxin]-disulfide + H2O = L-methionyl-(S)-S-oxide-[protein] + [thioredoxin]-dithiol. It catalyses the reaction [thioredoxin]-disulfide + L-methionine + H2O = L-methionine (S)-S-oxide + [thioredoxin]-dithiol. In terms of biological role, has an important function as a repair enzyme for proteins that have been inactivated by oxidation. Catalyzes the reversible oxidation-reduction of methionine sulfoxide in proteins to methionine. This is Peptide methionine sulfoxide reductase MsrA from Limosilactobacillus reuteri (strain DSM 20016) (Lactobacillus reuteri).